The primary structure comprises 142 residues: Hemoglobin subunit beta (142 aa).

In terms of domain architecture, Globin spans 3–142 (KLSEDQEHYI…VAEALSSNYH (140 aa)). Heme b is bound by residues His-60 and His-89.

It belongs to the globin family. As to quaternary structure, heterotetramer of two alpha chains and two beta chains. In terms of tissue distribution, red blood cells.

Functionally, involved in oxygen transport from gills to the various peripheral tissues. The chain is Hemoglobin subunit beta (HBB) from Hemitrygon akajei (Red stingray).